A 397-amino-acid polypeptide reads, in one-letter code: Elongation factor Tu-2 (397 aa).

The tr-type G domain maps to 10–206; it reads KPHVNIGTIG…AVDEFVPEPV (197 aa). The segment at 19–26 is G1; that stretch reads GHIDHGKT. Residue 19-26 coordinates GTP; it reads GHIDHGKT. Threonine 26 contacts Mg(2+). The interval 62–66 is G2; the sequence is GITIS. Positions 83-86 are G3; that stretch reads DCPG. GTP contacts are provided by residues 83–87 and 138–141; these read DCPGH and NKTD. The segment at 138–141 is G4; it reads NKTD. A G5 region spans residues 176–178; that stretch reads SAL.

The protein belongs to the TRAFAC class translation factor GTPase superfamily. Classic translation factor GTPase family. EF-Tu/EF-1A subfamily. Monomer.

The protein resides in the cytoplasm. It carries out the reaction GTP + H2O = GDP + phosphate + H(+). In terms of biological role, GTP hydrolase that promotes the GTP-dependent binding of aminoacyl-tRNA to the A-site of ribosomes during protein biosynthesis. The sequence is that of Elongation factor Tu-2 from Streptomyces ramocissimus.